A 477-amino-acid polypeptide reads, in one-letter code: Ankyrin repeat, SAM and basic leucine zipper domain-containing protein 1 (477 aa).

Residues Met1–Gly24 form a disordered region. A phosphoserine mark is found at Ser17, Ser18, and Ser20. 6 ANK repeats span residues Glu46–Ala76, Tyr80–Phe109, Asp112–Val146, Arg150–Thr179, Asn183–Leu212, and Asp216–Gly245. An SAM domain is found at Ser274 to Glu336.

As to quaternary structure, interacts with DDX4, PIWIL1, RANBP9 and TDRD1.

It is found in the cytoplasm. Plays a central role during spermatogenesis by repressing transposable elements and preventing their mobilization, which is essential for the germline integrity. Acts via the piRNA metabolic process, which mediates the repression of transposable elements during meiosis by forming complexes composed of piRNAs and Piwi proteins and governs the methylation and subsequent repression of transposons. Its association with pi-bodies suggests a participation in the primary piRNAs metabolic process. Required prior to the pachytene stage to facilitate the production of multiple types of piRNAs, including those associated with repeats involved in the regulation of retrotransposons. May act by mediating protein-protein interactions during germ cell maturation. In Saimiri boliviensis boliviensis (Bolivian squirrel monkey), this protein is Ankyrin repeat, SAM and basic leucine zipper domain-containing protein 1 (ASZ1).